The following is a 104-amino-acid chain: Urease subunit beta (104 aa).

The protein belongs to the urease beta subunit family. Heterotrimer of UreA (gamma), UreB (beta) and UreC (alpha) subunits. Three heterotrimers associate to form the active enzyme.

It localises to the cytoplasm. It carries out the reaction urea + 2 H2O + H(+) = hydrogencarbonate + 2 NH4(+). It functions in the pathway nitrogen metabolism; urea degradation; CO(2) and NH(3) from urea (urease route): step 1/1. In Mycolicibacterium vanbaalenii (strain DSM 7251 / JCM 13017 / BCRC 16820 / KCTC 9966 / NRRL B-24157 / PYR-1) (Mycobacterium vanbaalenii), this protein is Urease subunit beta.